The chain runs to 157 residues: Isotocin-neurophysin IT 1 (157 aa).

The N-terminal stretch at 1–20 is a signal peptide; it reads MFGTSVSALCLLFLLSVCTA. Residues C21 and C26 are joined by a disulfide bond. G29 carries the glycine amide modification. Disulfide bonds link C42-C86, C45-C59, C53-C76, C60-C66, C93-C106, C100-C118, and C107-C112.

It belongs to the vasopressin/oxytocin family. Seven disulfide bonds are present in neurophysin.

The protein resides in the secreted. Its function is as follows. Isotocin causes contraction of smooth muscles. The protein is Isotocin-neurophysin IT 1 of Oncorhynchus masou (Cherry salmon).